Reading from the N-terminus, the 325-residue chain is MKPTVISADALFDAHRAALKWEWIAGHAHPERRFDEVAVRDAQSAADLVGYLNYIHPYRVQIVGRREVRYLQPGDASGDNPVELQEKRISRIVTLEPPVLVVADGCTPPDRLVAMCERADIPLFCTEDSAGHVIDVLRGYLSQHFAERTSRHGVFMDILGLGVLLTGESGLGKSELGLELISRGHGLVADDVVDLFRVSQAAIEGRCPELLRNLLEVRGIGLLDIRAIFGETAVRRKMRLKLIVHLVRKETLDRDFERLPYEPLFEDILGMPVRKVVIAVDAGRNLAVLVEAAVRNTVLQLRGIDTYRDFIQRHRDLMDSGDSGL.

Residues H152 and K173 contribute to the active site. ATP is bound at residue 167 to 174 (GESGLGKS). S174 contributes to the Mg(2+) binding site. Catalysis depends on D191, which acts as the Proton acceptor; for phosphorylation activity. Proton donor; for dephosphorylation activity. The interval 215-224 (LEVRGIGLLD) is important for the catalytic mechanism of both phosphorylation and dephosphorylation. Mg(2+) is bound at residue E216. The active site involves R258. Positions 279 to 284 (AVDAGR) are important for the catalytic mechanism of dephosphorylation.

This sequence belongs to the HPrK/P family. Homohexamer. Requires Mg(2+) as cofactor.

It carries out the reaction [HPr protein]-L-serine + ATP = [HPr protein]-O-phospho-L-serine + ADP + H(+). It catalyses the reaction [HPr protein]-O-phospho-L-serine + phosphate + H(+) = [HPr protein]-L-serine + diphosphate. Catalyzes the ATP- as well as the pyrophosphate-dependent phosphorylation of a specific serine residue in HPr, a phosphocarrier protein of the phosphoenolpyruvate-dependent sugar phosphotransferase system (PTS). HprK/P also catalyzes the pyrophosphate-producing, inorganic phosphate-dependent dephosphorylation (phosphorolysis) of seryl-phosphorylated HPr (P-Ser-HPr). The chain is HPr kinase/phosphorylase from Leptothrix cholodnii (strain ATCC 51168 / LMG 8142 / SP-6) (Leptothrix discophora (strain SP-6)).